We begin with the raw amino-acid sequence, 331 residues long: Ribosomal RNA small subunit methyltransferase H (331 aa).

Residues 38–40, Asp-56, Phe-83, Asp-100, and Gln-107 contribute to the S-adenosyl-L-methionine site; that span reads GGY. The segment at 287–331 is disordered; sequence DEAELAENPRARSARLRVGVRTDAPAGKVDPQALGTPLIPKKGRR.

This sequence belongs to the methyltransferase superfamily. RsmH family.

It is found in the cytoplasm. The enzyme catalyses cytidine(1402) in 16S rRNA + S-adenosyl-L-methionine = N(4)-methylcytidine(1402) in 16S rRNA + S-adenosyl-L-homocysteine + H(+). Specifically methylates the N4 position of cytidine in position 1402 (C1402) of 16S rRNA. The chain is Ribosomal RNA small subunit methyltransferase H from Cereibacter sphaeroides (strain KD131 / KCTC 12085) (Rhodobacter sphaeroides).